We begin with the raw amino-acid sequence, 356 residues long: tRNA N6-adenosine threonylcarbamoyltransferase (356 aa).

Residues His115 and His119 each contribute to the Fe cation site. Substrate contacts are provided by residues 138–142, Asp171, Gly184, and Asn283; that span reads LVSGG. Asp311 contacts Fe cation.

It belongs to the KAE1 / TsaD family. Requires Fe(2+) as cofactor.

It is found in the cytoplasm. It carries out the reaction L-threonylcarbamoyladenylate + adenosine(37) in tRNA = N(6)-L-threonylcarbamoyladenosine(37) in tRNA + AMP + H(+). Its function is as follows. Required for the formation of a threonylcarbamoyl group on adenosine at position 37 (t(6)A37) in tRNAs that read codons beginning with adenine. Is involved in the transfer of the threonylcarbamoyl moiety of threonylcarbamoyl-AMP (TC-AMP) to the N6 group of A37, together with TsaE and TsaB. TsaD likely plays a direct catalytic role in this reaction. The protein is tRNA N6-adenosine threonylcarbamoyltransferase of Prochlorococcus marinus (strain MIT 9515).